Here is a 446-residue protein sequence, read N- to C-terminus: D(3) dopamine receptor (446 aa).

Residues 1–32 (MAPLSQISSHINSTCGAENSTGVNRARPHAYY) are Extracellular-facing. Residues Asn12 and Asn19 are each glycosylated (N-linked (GlcNAc...) asparagine). Residues 33–55 (ALSYCALILAIIFGNGLVCAAVL) form a helical membrane-spanning segment. Residues 56–65 (RERALQTTTN) are Cytoplasmic-facing. A helical membrane pass occupies residues 66–88 (YLVVSLAVADLLVATLVMPWVVY). Topologically, residues 89-104 (LEVTGGVWNFSRICCD) are extracellular. A glycan (N-linked (GlcNAc...) asparagine) is linked at Asn97. An intrachain disulfide couples Cys103 to Cys181. The chain crosses the membrane as a helical span at residues 105 to 126 (VFVTLDVMMCTASILNLCAISI). The Cytoplasmic portion of the chain corresponds to 127–149 (DRYTAVVMPVHYQHGTGQSSCRR). The chain crosses the membrane as a helical span at residues 150–170 (VALMITAVWVLAFAVSCPLLF). Topologically, residues 171-187 (GFNTTGDPSICSISNPD) are extracellular. N-linked (GlcNAc...) asparagine glycosylation occurs at Asn173. Residues 188–209 (FVIYSSVVSFYVPFGVTVLVYA) traverse the membrane as a helical segment. Topologically, residues 210-375 (RIYMVLRQRR…VPLREKKATQ (166 aa)) are cytoplasmic. The chain crosses the membrane as a helical span at residues 376 to 397 (MVVIVLGAFIVCWLPFFLTHVL). Over 398–412 (NTHCQACHVSPELYR) the chain is Extracellular. Cys401 and Cys404 are joined by a disulfide. A helical membrane pass occupies residues 413 to 432 (ATTWLGYVNSALNPVIYTTF). At 433–446 (NIEFRKAFLKILSC) the chain is on the cytoplasmic side.

This sequence belongs to the G-protein coupled receptor 1 family. In terms of assembly, interacts with CLIC6. Interacts with GRK4. Interacts with PALM. Interacts with FLNA (via filamin repeat 21); increases PKA-mediated phosphorylation of FLNA. Post-translationally, phosphorylated by GRK4. In terms of processing, palmitoylated.

It localises to the cell membrane. Dopamine receptor whose activity is mediated by G proteins which inhibit adenylyl cyclase. Promotes cell proliferation. This chain is D(3) dopamine receptor (Drd3), found in Mus musculus (Mouse).